Reading from the N-terminus, the 376-residue chain is Putative glutamate--cysteine ligase 2-1 (376 aa).

This sequence belongs to the glutamate--cysteine ligase type 2 family. YbdK subfamily.

The catalysed reaction is L-cysteine + L-glutamate + ATP = gamma-L-glutamyl-L-cysteine + ADP + phosphate + H(+). Its function is as follows. ATP-dependent carboxylate-amine ligase which exhibits weak glutamate--cysteine ligase activity. This Mycobacterium sp. (strain JLS) protein is Putative glutamate--cysteine ligase 2-1.